Reading from the N-terminus, the 206-residue chain is 2,3-bisphosphoglycerate-dependent phosphoglycerate mutase (206 aa).

Residues 9 to 16 (RHGQSEWN), 22 to 23 (TG), R61, 88 to 91 (ERDY), K99, 115 to 116 (RR), and 159 to 160 (GN) contribute to the substrate site. H10 acts as the Tele-phosphohistidine intermediate in catalysis. Residue E88 is the Proton donor/acceptor of the active site.

Belongs to the phosphoglycerate mutase family. BPG-dependent PGAM subfamily. As to quaternary structure, homodimer.

The enzyme catalyses (2R)-2-phosphoglycerate = (2R)-3-phosphoglycerate. Its pathway is carbohydrate degradation; glycolysis; pyruvate from D-glyceraldehyde 3-phosphate: step 3/5. Functionally, catalyzes the interconversion of 2-phosphoglycerate and 3-phosphoglycerate. This Brucella ovis (strain ATCC 25840 / 63/290 / NCTC 10512) protein is 2,3-bisphosphoglycerate-dependent phosphoglycerate mutase.